A 176-amino-acid chain; its full sequence is MGLPGPIHDILLVFLGSGIVLGSLGVILLTNTIYSAFSLGFVLVCISLFYILSNSYFVAAAQLLIYVGAINVLIIFAVMFMKGSEYSNDFSIWTVGDGVTSLVCTSIFFSLITTILDTSWYGIIWTTRSNQIMEQDLLSNVQQIGIHLVTDFILPFELISIVLLVALIGAIAMARQ.

Helical transmembrane passes span 10-30, 32-52, 61-81, 92-112, and 152-172; these read ILLV…ILLT, TIYS…FYIL, AQLL…VMFM, IWTV…FSLI, and FILP…GAIA.

This sequence belongs to the complex I subunit 6 family. As to quaternary structure, NDH is composed of at least 16 different subunits, 5 of which are encoded in the nucleus.

Its subcellular location is the plastid. It is found in the chloroplast thylakoid membrane. The enzyme catalyses a plastoquinone + NADH + (n+1) H(+)(in) = a plastoquinol + NAD(+) + n H(+)(out). It carries out the reaction a plastoquinone + NADPH + (n+1) H(+)(in) = a plastoquinol + NADP(+) + n H(+)(out). NDH shuttles electrons from NAD(P)H:plastoquinone, via FMN and iron-sulfur (Fe-S) centers, to quinones in the photosynthetic chain and possibly in a chloroplast respiratory chain. The immediate electron acceptor for the enzyme in this species is believed to be plastoquinone. Couples the redox reaction to proton translocation, and thus conserves the redox energy in a proton gradient. In Piper cenocladum (Ant piper), this protein is NAD(P)H-quinone oxidoreductase subunit 6, chloroplastic (ndhG).